The primary structure comprises 492 residues: Beta-Ala-His dipeptidase (492 aa).

His107 serves as a coordination point for Zn(2+). Asp109 is an active-site residue. Asp140 is a Zn(2+) binding site. Catalysis depends on Glu174, which acts as the Proton acceptor. Glu175 contacts Zn(2+). Phosphoserine is present on Ser194. Zn(2+)-binding residues include Asp203 and His453.

This sequence belongs to the peptidase M20A family. In terms of assembly, homodimer. Zn(2+) is required as a cofactor. As to expression, detected exclusively in kidney.

The protein resides in the secreted. The catalysed reaction is Preferential hydrolysis of the beta-Ala-|-His dipeptide (carnosine), and also anserine, Xaa-|-His dipeptides and other dipeptides including homocarnosine.. The enzyme catalyses carnosine + H2O = beta-alanine + L-histidine. It carries out the reaction anserine + H2O = N(pros)-methyl-L-histidine + beta-alanine. It catalyses the reaction L-alanyl-L-histidine + H2O = L-histidine + L-alanine. The catalysed reaction is glycyl-L-histidine + H2O = L-histidine + glycine. The enzyme catalyses L-homocarnosine + H2O = 4-aminobutanoate + L-histidine. Its function is as follows. Catalyzes the peptide bond hydrolysis in Xaa-His dipeptides, displaying the highest activity toward carnosine (beta-alanyl-L-histidine) and anserine (beta-alanyl-3-methyl-histidine). The protein is Beta-Ala-His dipeptidase (Cndp1) of Mus musculus (Mouse).